A 147-amino-acid polypeptide reads, in one-letter code: C-glycoside deglycosidase beta subunit (147 aa).

Belongs to the C-glycoside deglycosidase beta subunit family. As to quaternary structure, heterooctamer composed of four alpha subunits (DfgA) and four beta subunits (DfgB). Requires Mn(2+) as cofactor.

It catalyses the reaction 3''-dehydroisoorientin = 1,5-anhydro-D-erythro-hex-1-en-3-ulose + luteolin. It carries out the reaction 3''-dehydroisovitexin = 1,5-anhydro-D-erythro-hex-1-en-3-ulose + apigenin. Activity is strongly reduced in the presence of chelating agents. Functionally, carbon-carbon bond-cleaving enzyme which participates in the metabolism of C-glycosides. Acts on the C6-glycosylated compounds 3''-dehydroisoorientin (3''-oxo-homoorientin) and 3''-dehydroisovitexin (3''-oxo-isovitexin). The protein is C-glycoside deglycosidase beta subunit of Eubacterium cellulosolvens (strain ATCC 43171 / JCM 9499 / 6) (Cillobacterium cellulosolvens).